The sequence spans 385 residues: uncharacterized protein (385 aa).

Zn(2+) contacts are provided by D180, H258, and H275.

It belongs to the iron-containing alcohol dehydrogenase family. Zn(2+) serves as cofactor.

This is an uncharacterized protein from Synechocystis sp. (strain ATCC 27184 / PCC 6803 / Kazusa).